A 145-amino-acid chain; its full sequence is S-adenosylmethionine synthase 2 (145 aa).

Residues 6–7, Ala-23, Lys-27, and Lys-31 each bind ATP; that span reads RK. Lys-31 is an L-methionine binding site.

Belongs to the AdoMet synthase family. As to quaternary structure, homotetramer. It depends on Mn(2+) as a cofactor. Requires Mg(2+) as cofactor. The cofactor is Co(2+). K(+) is required as a cofactor. Mainly in floral buds and roots.

Its subcellular location is the cytoplasm. It catalyses the reaction L-methionine + ATP + H2O = S-adenosyl-L-methionine + phosphate + diphosphate. It functions in the pathway amino-acid biosynthesis; S-adenosyl-L-methionine biosynthesis; S-adenosyl-L-methionine from L-methionine: step 1/1. In terms of biological role, catalyzes the formation of S-adenosylmethionine from methionine and ATP. The reaction comprises two steps that are both catalyzed by the same enzyme: formation of S-adenosylmethionine (AdoMet) and triphosphate, and subsequent hydrolysis of the triphosphate. The polypeptide is S-adenosylmethionine synthase 2 (SMS-2) (Petroselinum crispum (Parsley)).